We begin with the raw amino-acid sequence, 284 residues long: 2-dehydro-3-deoxyphosphooctonate aldolase (284 aa).

It belongs to the KdsA family.

Its subcellular location is the cytoplasm. It catalyses the reaction D-arabinose 5-phosphate + phosphoenolpyruvate + H2O = 3-deoxy-alpha-D-manno-2-octulosonate-8-phosphate + phosphate. It functions in the pathway carbohydrate biosynthesis; 3-deoxy-D-manno-octulosonate biosynthesis; 3-deoxy-D-manno-octulosonate from D-ribulose 5-phosphate: step 2/3. It participates in bacterial outer membrane biogenesis; lipopolysaccharide biosynthesis. In Haemophilus influenzae (strain 86-028NP), this protein is 2-dehydro-3-deoxyphosphooctonate aldolase.